The chain runs to 184 residues: Ras-related protein Rap-1b (184 aa).

10-18 (GSGGVGKSA) serves as a coordination point for GTP. Residues 25–67 (QGIFVEKYDPTIEDSYRKQVEVDAQQCMLEILDTAGTEQFTAM) are interaction with KRIT1. Positions 32 to 40 (YDPTIEDSY) match the Effector region motif. An ADP-ribosylserine; by botulinum toxin modification is found at serine 39. GTP contacts are provided by residues 57–61 (DTAGT), 116–119 (NKCD), and 147–149 (SAK). The residue at position 179 (serine 179) is a Phosphoserine; by PKA. Cysteine 181 bears the Cysteine methyl ester mark. Cysteine 181 is lipidated: S-geranylgeranyl cysteine. The propeptide at 182–184 (QLL) is removed in mature form.

This sequence belongs to the small GTPase superfamily. Ras family. As to quaternary structure, heterodimer with RAP1GAP. Interacts with EPAC2. Interacts with SGSM1. Interacts with SGSM2. Interacts with SGSM3. Interacts with KRIT1. Interacts with RAP1GDS1.

It is found in the cell membrane. The protein resides in the cytoplasm. Its subcellular location is the cytosol. It localises to the cell junction. The enzyme catalyses GTP + H2O = GDP + phosphate + H(+). With respect to regulation, activated by guanine nucleotide-exchange factor (GEF) EPAC2 in a cAMP-dependent manner. GTP-binding protein that possesses intrinsic GTPase activity. Contributes to the polarizing activity of KRIT1 and CDH5 in the establishment and maintenance of correct endothelial cell polarity and vascular lumen. Required for the localization of phosphorylated PRKCZ, PARD3 and TIAM1 to the cell junction. Plays a role in the establishment of basal endothelial barrier function. This chain is Ras-related protein Rap-1b (Rap1b), found in Rattus norvegicus (Rat).